A 218-amino-acid polypeptide reads, in one-letter code: NAD(P)H-quinone oxidoreductase subunit I (218 aa).

2 4Fe-4S ferredoxin-type domains span residues 55 to 84 and 95 to 124; these read GRIHYEFDKCIACEVCVRVCPINLPVVDWV and RNYSIDFGACIFCGNCVEYCPTNCLSMTEE. Residues cysteine 64, cysteine 67, cysteine 70, cysteine 74, cysteine 104, cysteine 107, cysteine 110, and cysteine 114 each coordinate [4Fe-4S] cluster. Residues 179-218 are disordered; it reads LRAGKLPSQIIKELQADKSEEEGKNNSSDMVPNKLNSTNK. A compositionally biased stretch (basic and acidic residues) spans 192 to 202; the sequence is LQADKSEEEGK. The segment covering 203–218 has biased composition (polar residues); that stretch reads NNSSDMVPNKLNSTNK.

The protein belongs to the complex I 23 kDa subunit family. As to quaternary structure, NDH-1 is composed of at least 11 different subunits. Requires [4Fe-4S] cluster as cofactor.

It is found in the cellular thylakoid membrane. The catalysed reaction is a plastoquinone + NADH + (n+1) H(+)(in) = a plastoquinol + NAD(+) + n H(+)(out). It catalyses the reaction a plastoquinone + NADPH + (n+1) H(+)(in) = a plastoquinol + NADP(+) + n H(+)(out). In terms of biological role, NDH-1 shuttles electrons from an unknown electron donor, via FMN and iron-sulfur (Fe-S) centers, to quinones in the respiratory and/or the photosynthetic chain. The immediate electron acceptor for the enzyme in this species is believed to be plastoquinone. Couples the redox reaction to proton translocation, and thus conserves the redox energy in a proton gradient. The chain is NAD(P)H-quinone oxidoreductase subunit I from Prochlorococcus marinus (strain NATL2A).